A 453-amino-acid chain; its full sequence is Trigger factor (453 aa).

One can recognise a PPIase FKBP-type domain in the interval 171–256 (GDRITISFKG…VSLIEAPEEL (86 aa)).

It belongs to the FKBP-type PPIase family. Tig subfamily.

It is found in the cytoplasm. The catalysed reaction is [protein]-peptidylproline (omega=180) = [protein]-peptidylproline (omega=0). Its function is as follows. Involved in protein export. Acts as a chaperone by maintaining the newly synthesized protein in an open conformation. Functions as a peptidyl-prolyl cis-trans isomerase. This Nitrobacter winogradskyi (strain ATCC 25391 / DSM 10237 / CIP 104748 / NCIMB 11846 / Nb-255) protein is Trigger factor.